Here is a 517-residue protein sequence, read N- to C-terminus: ATP synthase subunit alpha (517 aa).

Residue 174-181 participates in ATP binding; that stretch reads GDRQTGKT.

This sequence belongs to the ATPase alpha/beta chains family. In terms of assembly, F-type ATPases have 2 components, CF(1) - the catalytic core - and CF(0) - the membrane proton channel. CF(1) has five subunits: alpha(3), beta(3), gamma(1), delta(1), epsilon(1). CF(0) has four main subunits: a(1), b(1), b'(1) and c(9-12).

The protein resides in the cell inner membrane. It catalyses the reaction ATP + H2O + 4 H(+)(in) = ADP + phosphate + 5 H(+)(out). Its function is as follows. Produces ATP from ADP in the presence of a proton gradient across the membrane. The alpha chain is a regulatory subunit. This Methylibium petroleiphilum (strain ATCC BAA-1232 / LMG 22953 / PM1) protein is ATP synthase subunit alpha.